We begin with the raw amino-acid sequence, 1384 residues long: MPNMKPLLEDAKRRVDRRLSASRQSISSSRIFSSAFPDRLKDDHDAQVDYTAPPRGAGSRDGQLPYMHQSIFSMIAAVGSKSDFHARFDESSDSEGEAEGQTQKQPGKASLSNKKKFPLSPTLKPQSTLEGRGRRHRRSISDNKLLRSLKPSPKSSKGTETTVQTEPPTSDEMSPLASPRRARSATPRAAPILSRMLEAEALLDKKQSADQPSSSTKGETDGTSEQSCASPLSLRLKEMFGFEMPEKVLMEYACSLLQNILLQGYMYVTEGHICFYAYLPRKSAVTIRSGYLHKRGRKNPKYNRYWFSLKGDVLSYYTDPSSLYFPSGHVDLRYGISASLTEQKDKDKEVRDFQVTTDQRTYYFRADSSASAKEWVKALQKVIFRAHNEGDSVKISFPIESIIDIEESPITDLAETFKIRVVESDESYAIDEYYFSFFESGRDAYNFVKGLISEGPMKTSQLLPPPSEQTSPATRARGPRNRWSLNSDLSQSRGNGIFKTQRKRSASTGQTNSGPDGIGMSPRQRDLSDSFVNSFEQATDASAVLQSMIDTTESASQILNRSDVFQSPTIHTLRQRHPSGDRTGRRLSDGTARSTHPNAADANRNGQEMQYASSDSDQGTQHPSKVNSSAPTLNELVKAGAYPLQRAAGFAEYLRSRSRQMSNLLASESMGYIEKVSGMWAGGRRHYGETEGVLPDDQDVDPEDKEDGVKHGDRFRAHFALPSTERLQATYYAYLHRVLPLYGKIYISQKKLCFRSLIPGTRTKLILPLKDIENVEKEKGFRFGYQGLVIIIRGHEELFFEFNTADARDDCAVTVHQSLESMRFLVESGLLAEQEKDEIESAQAEHRMLQEARLDGAGEHDSHASVNESSELHPIFDDPRASIINFKPSESLRITCLTIGSRGDVQPYIALCKGLLAEGHKPKIATHAEFEPWVRQHGIDFAPVDGDPAELMRICVENGMFTYSFLKEASTKFRGWIDDLLSSAWASCQDSDLLIESPSAMAGIHIAEALRIPYFRAFTMPWSRTRAYPHAFAVPENKMGGAYNYITYVMFDTVFWKAIAGQVNRWRKKQLGLKATTLDKMQPNKVPFLYNYSPSVVAPPLDYPDWIRITGYWFLSEGGNWTPPTDLLDFIHRARSDGKKIVYIGFGSIVVSDPSALTRTVVESVLKADVRCILSKGWSDRLGDPASAKVEIPLPPEIFQIQAAPHDWLFSQIDAAAHHGGAGTTGASLRAGVPTIVKPFFGDQFFFGTRVEDLGVGICMKKLNVSVFSRALWEATHSERMIVKARELGAQIRSENGVDTAIQAIYRDLEYAKTLARQRSIVSSTPFSPTPSAKTTAEQEEDDVDDSEEWTFVGDDTEIDVSRRLRDRAVSDADMLPEPVTSAS.

Disordered regions lie at residues 1–64 (MPNM…DGQL), 86–189 (ARFD…TPRA), and 204–229 (DKKQ…QSCA). Basic and acidic residues predominate over residues 7 to 19 (LLEDAKRRVDRRL). Over residues 21–36 (ASRQSISSSRIFSSAF) the composition is skewed to low complexity. Residues 38-47 (DRLKDDHDAQ) show a composition bias toward basic and acidic residues. The segment covering 146 to 156 (LRSLKPSPKSS) has biased composition (low complexity). Residues 158 to 172 (GTETTVQTEPPTSDE) show a composition bias toward polar residues. A compositionally biased stretch (low complexity) spans 174-189 (SPLASPRRARSATPRA). A compositionally biased stretch (polar residues) spans 209-229 (ADQPSSSTKGETDGTSEQSCA). Residues 237-284 (KEMFGFEMPEKVLMEYACSLLQNILLQGYMYVTEGHICFYAYLPRKSA) form the GRAM 1 domain. Positions 285–384 (VTIRSGYLHK…WVKALQKVIF (100 aa)) constitute a PH domain. Disordered stretches follow at residues 457–526 (MKTS…RQRD) and 560–629 (NRSD…VNSS). Composition is skewed to polar residues over residues 458–473 (KTSQ…TSPA), 483–494 (WSLNSDLSQSRG), and 560–572 (NRSD…TIHT). Residues 578-588 (PSGDRTGRRLS) are compositionally biased toward basic and acidic residues. The segment covering 604-629 (RNGQEMQYASSDSDQGTQHPSKVNSS) has biased composition (polar residues). A GRAM 2 domain is found at 714 to 817 (RFRAHFALPS…RDDCAVTVHQ (104 aa)). Ser901, Arg902, Asp904, Ala1204, His1206, His1219, Gly1223, Thr1224, Asp1243, and Gln1244 together coordinate UDP-alpha-D-glucose. The span at 1322–1336 (VSSTPFSPTPSAKTT) shows a compositional bias: polar residues. Residues 1322–1350 (VSSTPFSPTPSAKTTAEQEEDDVDDSEEW) form a disordered region. Acidic residues predominate over residues 1338–1350 (EQEEDDVDDSEEW).

It belongs to the glycosyltransferase 28 family.

The protein localises to the cytoplasm. It localises to the preautophagosomal structure membrane. It carries out the reaction a sterol + UDP-alpha-D-glucose = a sterol 3-beta-D-glucoside + UDP + H(+). The catalysed reaction is ergosterol + UDP-alpha-D-glucose = ergosteryl 3-beta-D-glucoside + UDP + H(+). In terms of biological role, sterol glycosyltransferase responsible for the glycosylation of ergosterol to form ergosterol-glucoside. Involved in cytoplasm to vacuole transport (Cvt), pexophagy or nonselective autophagy. This is Sterol 3-beta-glucosyltransferase from Aspergillus oryzae (strain ATCC 42149 / RIB 40) (Yellow koji mold).